A 276-amino-acid chain; its full sequence is Large ribosomal subunit protein uL2 (276 aa).

Residues Asn-203–Lys-276 form a disordered region. Residues Gly-210–Gln-220 show a composition bias toward basic residues. Basic and acidic residues predominate over residues Lys-265–Lys-276.

Belongs to the universal ribosomal protein uL2 family. In terms of assembly, part of the 50S ribosomal subunit. Forms a bridge to the 30S subunit in the 70S ribosome.

Functionally, one of the primary rRNA binding proteins. Required for association of the 30S and 50S subunits to form the 70S ribosome, for tRNA binding and peptide bond formation. It has been suggested to have peptidyltransferase activity; this is somewhat controversial. Makes several contacts with the 16S rRNA in the 70S ribosome. This is Large ribosomal subunit protein uL2 from Coprothermobacter proteolyticus (strain ATCC 35245 / DSM 5265 / OCM 4 / BT).